Reading from the N-terminus, the 123-residue chain is Large ribosomal subunit protein uL18 (123 aa).

It belongs to the universal ribosomal protein uL18 family. In terms of assembly, part of the 50S ribosomal subunit; part of the 5S rRNA/L5/L18/L25 subcomplex. Contacts the 5S and 23S rRNAs.

This is one of the proteins that bind and probably mediate the attachment of the 5S RNA into the large ribosomal subunit, where it forms part of the central protuberance. The protein is Large ribosomal subunit protein uL18 of Bifidobacterium adolescentis (strain ATCC 15703 / DSM 20083 / NCTC 11814 / E194a).